We begin with the raw amino-acid sequence, 503 residues long: Lysine--tRNA ligase (503 aa).

Residues glutamate 414 and glutamate 421 each contribute to the Mg(2+) site.

Belongs to the class-II aminoacyl-tRNA synthetase family. Homodimer. The cofactor is Mg(2+).

The protein localises to the cytoplasm. The enzyme catalyses tRNA(Lys) + L-lysine + ATP = L-lysyl-tRNA(Lys) + AMP + diphosphate. This chain is Lysine--tRNA ligase, found in Neisseria gonorrhoeae (strain ATCC 700825 / FA 1090).